We begin with the raw amino-acid sequence, 587 residues long: Vesicular glutamate transporter 2.2 (587 aa).

Topologically, residues 1–71 are cytoplasmic; that stretch reads MDTVKERVLA…CTCFGLPRRY (71 aa). The chain crosses the membrane as a helical span at residues 72 to 92; that stretch reads IIAIMSGLGFCISFGIRCNLG. The Vesicular segment spans residues 93–125; it reads VAIVDMVNNSTIHKGGKIIIKGKAKFNWDPETV. 2 N-linked (GlcNAc...) asparagine glycosylation sites follow: Asn100 and Asn101. A helical transmembrane segment spans residues 126-146; sequence GMIHGSFFWGYTVTQIPGGYI. The Cytoplasmic segment spans residues 147 to 149; sequence SSR. The chain crosses the membrane as a helical span at residues 150-170; it reads LAANRVFGAAILLTSTLNMFI. Residues 171–180 are Vesicular-facing; the sequence is PSAARVHYGC. A helical transmembrane segment spans residues 181–203; it reads VMFVRILQGLVEGVTYPACHGIW. Residues 204 to 217 lie on the Cytoplasmic side of the membrane; sequence SKWAPPLERSRLAT. Residues 218-238 traverse the membrane as a helical segment; the sequence is TSFCGSYAGAVVAMPLAGILV. At 239-245 the chain is on the vesicular side; it reads QYSGWSS. A helical membrane pass occupies residues 246-266; sequence VFYIYGSFGIVWYMFWILVSY. Topologically, residues 267–311 are cytoplasmic; the sequence is ESPADHPTITDEERTYIEESIGESAKLLGAMEKYKTPWRKFFTSM. Residues 312-332 form a helical membrane-spanning segment; that stretch reads PVYAIIVANFCRSWTFYLLLI. Over 333–350 the chain is Vesicular; it reads SQPAYFEEVFGFEISKVG. Residues 351-371 form a helical membrane-spanning segment; sequence MVSALPHLVMTIIVPIGGQLA. Topologically, residues 372–387 are cytoplasmic; sequence DYLRSKNILTTTTVRK. The chain crosses the membrane as a helical span at residues 388–408; sequence IMNCGGFGMEATLLLVVGFSH. The Vesicular segment spans residues 409–410; that stretch reads SK. The helical transmembrane segment at 411–431 threads the bilayer; the sequence is GVAISFLVLAVGFSGFAISGF. The Cytoplasmic portion of the chain corresponds to 432 to 444; sequence NVNHLDIAPRYAS. The helical transmembrane segment at 445–465 threads the bilayer; that stretch reads ILMGISNGVGTLSGMVCPLIV. The Vesicular segment spans residues 466-479; it reads GAMTKNKTREEWQN. Residue Asn471 is glycosylated (N-linked (GlcNAc...) asparagine). The chain crosses the membrane as a helical span at residues 480-500; the sequence is VFLIASLVHYGGVIFYGIFAS. At 501-587 the chain is on the cytoplasmic side; sequence GEKQPWADPE…ERTYTGDGYS (87 aa).

It belongs to the major facilitator superfamily. Sodium/anion cotransporter family. VGLUT subfamily. As to expression, expressed in spinal cord.

The protein localises to the cytoplasmic vesicle. The protein resides in the secretory vesicle. It is found in the synaptic vesicle membrane. Its subcellular location is the membrane. It localises to the synapse. The protein localises to the synaptosome. The protein resides in the cell membrane. It carries out the reaction L-glutamate(out) = L-glutamate(in). The enzyme catalyses 3 Na(+)(out) + phosphate(out) = 3 Na(+)(in) + phosphate(in). It catalyses the reaction phosphate(in) = phosphate(out). The catalysed reaction is K(+)(in) + H(+)(out) = K(+)(out) + H(+)(in). It carries out the reaction chloride(in) = chloride(out). With respect to regulation, chloride channel activity is allosterically activated by lumenal H(+) and Cl(-) leading to synaptic vesicles acidification. The L-glutamate transport activity is allosterically activated by lumenal H(+) and Cl(-). The allosteric requirement for H(+) efficiently prevents non-vesicular efflux across the plasma membrane. The L-glutamate uniporter activity exhibits a biphasic dependence on chloride concentration. Multifunctional transporter that transports L-glutamate as well as multiple ions such as chloride, proton, potassium, sodium and phosphate. At the synaptic vesicle membrane, mainly functions as a uniporter which transports preferentially L-glutamate but also, phosphate from the cytoplasm into synaptic vesicles at presynaptic nerve terminals of excitatory neural cells. The L-glutamate or phosphate uniporter activity is electrogenic and is driven by the proton electrochemical gradient, mainly by the electrical gradient established by the vacuolar H(+)-ATPase across the synaptic vesicle membrane. In addition, functions as a chloride channel that allows a chloride permeation through the synaptic vesicle membrane therefore affects the proton electrochemical gradient and promotes synaptic vesicles acidification. Moreover, functions as a vesicular K(+)/H(+) antiport allowing to maintain the electrical gradient and to decrease chemical gradient and therefore sustain vesicular L-glutamate uptake. The vesicular H(+)/H(+) antiport activity is electroneutral. At the plasma membrane, following exocytosis, functions as a symporter of Na(+) and phosphate from the extracellular space to the cytoplasm allowing synaptic phosphate homeostasis regulation. The symporter activity is driven by an inside negative membrane potential and is electrogenic. Also involved in the regulation of retinal hyaloid vessel regression during postnatal development. May also play a role in the endocrine L-glutamatergic system of other tissues such as pineal gland and pancreas. The sequence is that of Vesicular glutamate transporter 2.2 (slc17a6a) from Danio rerio (Zebrafish).